Here is a 286-residue protein sequence, read N- to C-terminus: Nucleotide-binding protein HCH_05324 (286 aa).

8–15 lines the ATP pocket; it reads GRSGSGKS. Residue 60–63 participates in GTP binding; the sequence is DARN.

It belongs to the RapZ-like family.

Functionally, displays ATPase and GTPase activities. In Hahella chejuensis (strain KCTC 2396), this protein is Nucleotide-binding protein HCH_05324.